The following is a 132-amino-acid chain: Small ribosomal subunit protein uS8c (132 aa).

Belongs to the universal ribosomal protein uS8 family. In terms of assembly, part of the 30S ribosomal subunit.

Its subcellular location is the plastid. It is found in the chloroplast. One of the primary rRNA binding proteins, it binds directly to 16S rRNA central domain where it helps coordinate assembly of the platform of the 30S subunit. The polypeptide is Small ribosomal subunit protein uS8c (rps8) (Staurastrum punctulatum (Green alga)).